A 307-amino-acid chain; its full sequence is Small ribosomal subunit protein uS2 (307 aa).

Residues 256–307 are disordered; sequence GGEAEQAAVDATGGAATEETPAAESTGAASEAAAVSEAAEPATEQPAADAEA. Low complexity predominate over residues 259-307; the sequence is AEQAAVDATGGAATEETPAAESTGAASEAAAVSEAAEPATEQPAADAEA.

Belongs to the universal ribosomal protein uS2 family.

This chain is Small ribosomal subunit protein uS2, found in Nocardioides sp. (strain ATCC BAA-499 / JS614).